A 342-amino-acid polypeptide reads, in one-letter code: Serpentine receptor class delta-33 (342 aa).

7 helical membrane passes run 26–46, 62–82, 112–132, 148–168, 205–225, 261–281, and 287–307; these read IFVITVTILTSIGFLLNLLLL, IFLANTTITQLVYALFAVTSM, YVGILHLSLNSFISLMLSMIY, IILCIIGYFFPFLIFASCSNI, LIILTLAVTCGLVPIYFVMYW, IIPLVSVFPASIFWCLSQLGF, and YSYFIIPCLSLGCIADPVVTI.

The protein belongs to the nematode receptor-like protein srd family.

It is found in the membrane. The sequence is that of Serpentine receptor class delta-33 (srd-33) from Caenorhabditis elegans.